The primary structure comprises 548 residues: Chaperonin GroEL (548 aa).

ATP-binding positions include 30-33 (TLGP), Lys51, 87-91 (DGTTT), Gly415, 479-481 (NAA), and Asp495.

Belongs to the chaperonin (HSP60) family. Forms a cylinder of 14 subunits composed of two heptameric rings stacked back-to-back. Interacts with the co-chaperonin GroES.

It localises to the cytoplasm. The catalysed reaction is ATP + H2O + a folded polypeptide = ADP + phosphate + an unfolded polypeptide.. In terms of biological role, together with its co-chaperonin GroES, plays an essential role in assisting protein folding. The GroEL-GroES system forms a nano-cage that allows encapsulation of the non-native substrate proteins and provides a physical environment optimized to promote and accelerate protein folding. The polypeptide is Chaperonin GroEL (Pseudomonas fluorescens (strain Pf0-1)).